Reading from the N-terminus, the 261-residue chain is MEVVIVPDAADAAALVADTIGALLEREPEPVLGLATGSSPLAVYDELAARYERGEVSFANARAFMLDEYVGLPADHPERYRTVIEREFAGRVDFAPGAVQGPDGTAEDVAAACAAYEQAITASGGVDLQILGIGTDGHIAFNEPGSSLASRTRIKTLTEQTRRDNARFFGGDVDAVPTHCLTQGLATIMAAKHIVLLASGRGKAEAIHHLVEGAVSAMWPATILQHHPHVSVLVDPAAASRLQLADYYRQTYAAKPDWQGL.

The Proton acceptor; for enolization step role is filled by Asp-67. Residue Asp-136 is the For ring-opening step of the active site. The Proton acceptor; for ring-opening step role is filled by His-138. The active-site For ring-opening step is Glu-143.

The protein belongs to the glucosamine/galactosamine-6-phosphate isomerase family. NagB subfamily.

The enzyme catalyses alpha-D-glucosamine 6-phosphate + H2O = beta-D-fructose 6-phosphate + NH4(+). It functions in the pathway amino-sugar metabolism; N-acetylneuraminate degradation; D-fructose 6-phosphate from N-acetylneuraminate: step 5/5. In terms of biological role, catalyzes the reversible isomerization-deamination of glucosamine 6-phosphate (GlcN6P) to form fructose 6-phosphate (Fru6P) and ammonium ion. In Beutenbergia cavernae (strain ATCC BAA-8 / DSM 12333 / CCUG 43141 / JCM 11478 / NBRC 16432 / NCIMB 13614 / HKI 0122), this protein is Glucosamine-6-phosphate deaminase.